Consider the following 417-residue polypeptide: Gamma-glutamyl phosphate reductase (417 aa).

Belongs to the gamma-glutamyl phosphate reductase family.

The protein resides in the cytoplasm. The enzyme catalyses L-glutamate 5-semialdehyde + phosphate + NADP(+) = L-glutamyl 5-phosphate + NADPH + H(+). It participates in amino-acid biosynthesis; L-proline biosynthesis; L-glutamate 5-semialdehyde from L-glutamate: step 2/2. Its function is as follows. Catalyzes the NADPH-dependent reduction of L-glutamate 5-phosphate into L-glutamate 5-semialdehyde and phosphate. The product spontaneously undergoes cyclization to form 1-pyrroline-5-carboxylate. The protein is Gamma-glutamyl phosphate reductase of Escherichia coli (strain K12 / MC4100 / BW2952).